Consider the following 305-residue polypeptide: uncharacterized protein (305 aa).

The segment at 267 to 287 is disordered; it reads ADEQEKNWNGGAKKNARAEPA.

It belongs to the DnaB/DnaD family.

This is an uncharacterized protein from Listeria innocua serovar 6a (strain ATCC BAA-680 / CLIP 11262).